The following is a 377-amino-acid chain: MASPRFNSIIIILFICTISLSIVSISCKEDLKTNQAALFAFGDSLFEAGNNNYFDSISSFRSNFWPYGKTTFKFPTGRVSDGRIMIDFIAEYAWLPLIPPNLQPGYSNSQLTYGLNFATTAAGVFAGTFPGSVTNLSKDLGTQLNNFKNVEKTLRSNLGDAEARRVISKAVYLFHIGANDYQYPFFANTSTFSNTTKERFIDFVIGNTTTVIEELYKLGARKFGFLSLGPFGCTPSALIINSTKIGSCFEPVTELINLHNQEFPKVLRRLERRLSGFKYALHDFHTSLSQRINNPSRYGFKEGEMACCGSGPLRGINTCGFRNGPSQGYKLCENADDYVFFDPSHLTETAHQQIAELIWSGPPNVTAPYNLKTLFRL.

A signal peptide spans Met-1 to Ser-21. Ser-44 (nucleophile) is an active-site residue. Asn-135, Asn-188, Asn-194, Asn-207, and Asn-241 each carry an N-linked (GlcNAc...) asparagine glycan. Residues Asp-342 and His-345 contribute to the active site. Asn-364 is a glycosylation site (N-linked (GlcNAc...) asparagine).

It belongs to the 'GDSL' lipolytic enzyme family.

It localises to the secreted. This chain is GDSL esterase/lipase 4 (GLIP4), found in Arabidopsis thaliana (Mouse-ear cress).